The sequence spans 348 residues: Mannonate dehydratase (348 aa).

The protein belongs to the mannonate dehydratase family. Fe(2+) serves as cofactor. Requires Mn(2+) as cofactor.

It catalyses the reaction D-mannonate = 2-dehydro-3-deoxy-D-gluconate + H2O. It participates in carbohydrate metabolism; pentose and glucuronate interconversion. Its function is as follows. Catalyzes the dehydration of D-mannonate. The sequence is that of Mannonate dehydratase from Streptococcus agalactiae serotype III (strain NEM316).